Reading from the N-terminus, the 370-residue chain is MDGLHPASWMLLLGSLAFWSASSLLLFSLALPGARASNQLLSECHNGKGKGINCSELTVRESEVRVCDESSCKYGGVCKEEGDVLKCICQFQCQTNYAPVCGSNGDTYQNECFLRRSACKQQKDITVVARGPCFSDIASGSGEGEYEGSGGEVHKKHSKCGVCKFGAECDEDAGDVGCVCNIDCSGHNFNPVCATDGSSYSNPCLVREASCLRQEQIDVKHIRSCIETDETSIMGKKDEGLQNRPEVKDSTDQREGDFMGNYIPCSENYNGYCVHGKCELSYSSQKASCRCDSGYTGQYCDKTDFNILYVVPSRQKLTHVLIAAIIGAVQIAIIVAIVMCITRKCPKNNRGRRQKQNLGHFSSDTSSRMV.

The signal sequence occupies residues 1–36 (MDGLHPASWMLLLGSLAFWSASSLLLFSLALPGARA). Residues 37 to 320 (SNQLLSECHN…VPSRQKLTHV (284 aa)) are Extracellular-facing. N-linked (GlcNAc...) asparagine glycosylation is present at Asn53. Kazal-like domains are found at residues 88-135 (ICQF…PCFS) and 179-227 (VCNI…SCIE). Intrachain disulfides connect Cys89–Cys119, Cys93–Cys112, Cys101–Cys133, Cys180–Cys211, Cys184–Cys204, Cys193–Cys225, Cys265–Cys278, Cys273–Cys289, and Cys291–Cys300. One can recognise an EGF-like domain in the interval 261 to 301 (NYIPCSENYNGYCVHGKCELSYSSQKASCRCDSGYTGQYCD). Residues 321–341 (LIAAIIGAVQIAIIVAIVMCI) traverse the membrane as a helical segment. Residues 342-370 (TRKCPKNNRGRRQKQNLGHFSSDTSSRMV) are Cytoplasmic-facing. Positions 349-370 (NRGRRQKQNLGHFSSDTSSRMV) are disordered. Polar residues predominate over residues 356-370 (QNLGHFSSDTSSRMV).

Belongs to the tomoregulin family. In terms of assembly, interacts with cripto. As to expression, expressed at highest levels in brain, and at lower levels in neuroendocrine tissues. Present in neurons from the diencephalon (at protein level).

Its subcellular location is the cell membrane. Inhibits nodal/nr-1 and bmp signaling during neural patterning through interaction with cripto. This Xenopus laevis (African clawed frog) protein is Tomoregulin-1 (tmeff1).